A 285-amino-acid polypeptide reads, in one-letter code: GPN-loop GTPase 3 (285 aa).

13–18 (GSGKST) serves as a coordination point for GTP. Residues 70–72 (GPN) carry the Gly-Pro-Asn (GPN)-loop; involved in dimer interface motif. 172–175 (TKID) is a binding site for GTP. Residues 253–276 (GEDLEPKEPPLENDDDDDDDEGDE) form a disordered region. A compositionally biased stretch (acidic residues) spans 263–275 (LENDDDDDDDEGD).

This sequence belongs to the GPN-loop GTPase family. Heterodimer with gpn1. Binds to RNA polymerase II (RNAPII).

Small GTPase required for proper localization of RNA polymerase II (RNAPII). May act at an RNAP assembly step prior to nuclear import. This chain is GPN-loop GTPase 3 (gpn3), found in Dictyostelium discoideum (Social amoeba).